The sequence spans 114 residues: UPF0342 protein LSEI_1724 (114 aa).

This sequence belongs to the UPF0342 family.

The protein is UPF0342 protein LSEI_1724 of Lacticaseibacillus paracasei (strain ATCC 334 / BCRC 17002 / CCUG 31169 / CIP 107868 / KCTC 3260 / NRRL B-441) (Lactobacillus paracasei).